The sequence spans 346 residues: Tryptophan--tRNA ligase (346 aa).

ATP is bound by residues 21–23 and 30–31; these read QPT and GN. The 'HIGH' region motif lies at 22–31; that stretch reads PTADSYHLGN. Asp-147 lines the L-tryptophan pocket. Residues 159-161, Ile-198, and 207-211 each bind ATP; these read GED and KMSKS. The short motif at 207 to 211 is the 'KMSKS' region element; sequence KMSKS.

Belongs to the class-I aminoacyl-tRNA synthetase family. In terms of assembly, homodimer.

The protein localises to the cytoplasm. It carries out the reaction tRNA(Trp) + L-tryptophan + ATP = L-tryptophyl-tRNA(Trp) + AMP + diphosphate + H(+). Catalyzes the attachment of tryptophan to tRNA(Trp). The chain is Tryptophan--tRNA ligase from Corynebacterium efficiens (strain DSM 44549 / YS-314 / AJ 12310 / JCM 11189 / NBRC 100395).